Consider the following 514-residue polypeptide: ATP synthase subunit alpha (514 aa).

Residue 170-177 (GDRQTGKT) participates in ATP binding.

This sequence belongs to the ATPase alpha/beta chains family. As to quaternary structure, F-type ATPases have 2 components, CF(1) - the catalytic core - and CF(0) - the membrane proton channel. CF(1) has five subunits: alpha(3), beta(3), gamma(1), delta(1), epsilon(1). CF(0) has three main subunits: a(1), b(2) and c(9-12). The alpha and beta chains form an alternating ring which encloses part of the gamma chain. CF(1) is attached to CF(0) by a central stalk formed by the gamma and epsilon chains, while a peripheral stalk is formed by the delta and b chains.

The protein resides in the cell inner membrane. It carries out the reaction ATP + H2O + 4 H(+)(in) = ADP + phosphate + 5 H(+)(out). In terms of biological role, produces ATP from ADP in the presence of a proton gradient across the membrane. The alpha chain is a regulatory subunit. The polypeptide is ATP synthase subunit alpha (Acinetobacter baumannii (strain AB307-0294)).